An 83-amino-acid polypeptide reads, in one-letter code: MVTIRLARGGAKKRPFYNIVVADSRNARDGRFIERVGFFNPLARGQEETLRLDLARVEHWVSNGAATTERVAKLIKDARKATA.

It belongs to the bacterial ribosomal protein bS16 family.

In Shewanella putrefaciens (strain CN-32 / ATCC BAA-453), this protein is Small ribosomal subunit protein bS16.